The sequence spans 475 residues: Adenosylhomocysteinase (475 aa).

Substrate contacts are provided by Thr63, Asp138, and Glu199. NAD(+) is bound at residue 200–202 (TTT). The substrate site is built by Lys229 and Asp233. NAD(+)-binding positions include Asn234, 263–268 (GYGDVG), Glu286, Asn321, 342–344 (IGH), and Asn389.

Belongs to the adenosylhomocysteinase family. It depends on NAD(+) as a cofactor.

The protein resides in the cytoplasm. The enzyme catalyses S-adenosyl-L-homocysteine + H2O = L-homocysteine + adenosine. It functions in the pathway amino-acid biosynthesis; L-homocysteine biosynthesis; L-homocysteine from S-adenosyl-L-homocysteine: step 1/1. May play a key role in the regulation of the intracellular concentration of adenosylhomocysteine. This Solibacter usitatus (strain Ellin6076) protein is Adenosylhomocysteinase.